The chain runs to 104 residues: Large ribosomal subunit protein uL24 (104 aa).

Belongs to the universal ribosomal protein uL24 family. As to quaternary structure, part of the 50S ribosomal subunit.

In terms of biological role, one of two assembly initiator proteins, it binds directly to the 5'-end of the 23S rRNA, where it nucleates assembly of the 50S subunit. Functionally, one of the proteins that surrounds the polypeptide exit tunnel on the outside of the subunit. The polypeptide is Large ribosomal subunit protein uL24 (Clostridium beijerinckii (strain ATCC 51743 / NCIMB 8052) (Clostridium acetobutylicum)).